The chain runs to 184 residues: Protein Syd (184 aa).

The protein belongs to the Syd family.

The protein localises to the cell inner membrane. Interacts with the SecY protein in vivo. May bind preferentially to an uncomplexed state of SecY, thus functioning either as a chelating agent for excess SecY in the cell or as a regulatory factor that negatively controls the translocase function. The chain is Protein Syd from Psychromonas ingrahamii (strain DSM 17664 / CCUG 51855 / 37).